Reading from the N-terminus, the 86-residue chain is Large ribosomal subunit protein uL23 (86 aa).

Belongs to the universal ribosomal protein uL23 family. As to quaternary structure, part of the 50S ribosomal subunit. Contacts protein L29.

Functionally, binds to 23S rRNA. One of the proteins that surrounds the polypeptide exit tunnel on the outside of the ribosome. In Aeropyrum pernix (strain ATCC 700893 / DSM 11879 / JCM 9820 / NBRC 100138 / K1), this protein is Large ribosomal subunit protein uL23.